A 462-amino-acid polypeptide reads, in one-letter code: Argininosuccinate lyase (462 aa).

This sequence belongs to the lyase 1 family. Argininosuccinate lyase subfamily.

Its subcellular location is the cytoplasm. The enzyme catalyses 2-(N(omega)-L-arginino)succinate = fumarate + L-arginine. It participates in amino-acid biosynthesis; L-arginine biosynthesis; L-arginine from L-ornithine and carbamoyl phosphate: step 3/3. This is Argininosuccinate lyase from Bacillus cereus (strain ZK / E33L).